A 291-amino-acid polypeptide reads, in one-letter code: Urease accessory protein UreD (291 aa).

The protein belongs to the UreD family. In terms of assembly, ureD, UreF and UreG form a complex that acts as a GTP-hydrolysis-dependent molecular chaperone, activating the urease apoprotein by helping to assemble the nickel containing metallocenter of UreC. The UreE protein probably delivers the nickel.

It localises to the cytoplasm. Its function is as follows. Required for maturation of urease via the functional incorporation of the urease nickel metallocenter. In Acinetobacter baumannii (strain ATCC 17978 / DSM 105126 / CIP 53.77 / LMG 1025 / NCDC KC755 / 5377), this protein is Urease accessory protein UreD.